The chain runs to 475 residues: Ribulose bisphosphate carboxylase large chain (475 aa).

Lys-14 carries the N6,N6,N6-trimethyllysine modification. Positions 123 and 173 each coordinate substrate. Residue Lys-175 is the Proton acceptor of the active site. Lys-177 provides a ligand contact to substrate. Residues Lys-201, Asp-203, and Glu-204 each contribute to the Mg(2+) site. Residue Lys-201 is modified to N6-carboxylysine. His-294 serves as the catalytic Proton acceptor. Residues Arg-295, His-327, and Ser-379 each coordinate substrate.

It belongs to the RuBisCO large chain family. Type I subfamily. Heterohexadecamer of 8 large chains and 8 small chains; disulfide-linked. The disulfide link is formed within the large subunit homodimers. Mg(2+) serves as cofactor. In terms of processing, the disulfide bond which can form in the large chain dimeric partners within the hexadecamer appears to be associated with oxidative stress and protein turnover.

It localises to the plastid. It is found in the chloroplast. It catalyses the reaction 2 (2R)-3-phosphoglycerate + 2 H(+) = D-ribulose 1,5-bisphosphate + CO2 + H2O. The enzyme catalyses D-ribulose 1,5-bisphosphate + O2 = 2-phosphoglycolate + (2R)-3-phosphoglycerate + 2 H(+). RuBisCO catalyzes two reactions: the carboxylation of D-ribulose 1,5-bisphosphate, the primary event in carbon dioxide fixation, as well as the oxidative fragmentation of the pentose substrate in the photorespiration process. Both reactions occur simultaneously and in competition at the same active site. This is Ribulose bisphosphate carboxylase large chain from Actinidia chinensis (Kiwi).